Reading from the N-terminus, the 135-residue chain is Small ribosomal subunit protein uS12 (135 aa).

Asp89 carries the 3-methylthioaspartic acid modification. Residues 103 to 135 (DTAGVKNRMQSRSKYGTKRPKPGQAAAPAGKKR) are disordered. A compositionally biased stretch (basic residues) spans 111 to 123 (MQSRSKYGTKRPK). Residues 124–135 (PGQAAAPAGKKR) show a composition bias toward low complexity.

The protein belongs to the universal ribosomal protein uS12 family. Part of the 30S ribosomal subunit. Contacts proteins S8 and S17. May interact with IF1 in the 30S initiation complex.

With S4 and S5 plays an important role in translational accuracy. Functionally, interacts with and stabilizes bases of the 16S rRNA that are involved in tRNA selection in the A site and with the mRNA backbone. Located at the interface of the 30S and 50S subunits, it traverses the body of the 30S subunit contacting proteins on the other side and probably holding the rRNA structure together. The combined cluster of proteins S8, S12 and S17 appears to hold together the shoulder and platform of the 30S subunit. This is Small ribosomal subunit protein uS12 from Gloeobacter violaceus (strain ATCC 29082 / PCC 7421).